Reading from the N-terminus, the 156-residue chain is Cyanate hydratase (156 aa).

Residues Arg-96, Glu-99, and Ser-122 contribute to the active site.

This sequence belongs to the cyanase family.

The enzyme catalyses cyanate + hydrogencarbonate + 3 H(+) = NH4(+) + 2 CO2. Its function is as follows. Catalyzes the reaction of cyanate with bicarbonate to produce ammonia and carbon dioxide. This chain is Cyanate hydratase, found in Mycobacteroides abscessus (strain ATCC 19977 / DSM 44196 / CCUG 20993 / CIP 104536 / JCM 13569 / NCTC 13031 / TMC 1543 / L948) (Mycobacterium abscessus).